The chain runs to 503 residues: Cytochrome P450 3A7 (503 aa).

Heme is bound at residue Cys-442.

This sequence belongs to the cytochrome P450 family. Heme is required as a cofactor. Expressed in fetal liver (at protein level).

It is found in the endoplasmic reticulum membrane. The protein resides in the microsome membrane. It catalyses the reaction an organic molecule + reduced [NADPH--hemoprotein reductase] + O2 = an alcohol + oxidized [NADPH--hemoprotein reductase] + H2O + H(+). It carries out the reaction 3beta-hydroxyandrost-5-en-17-one + reduced [NADPH--hemoprotein reductase] + O2 = 3beta,16alpha-dihydroxy-androst-5-en-17-one + oxidized [NADPH--hemoprotein reductase] + H2O + H(+). The enzyme catalyses dehydroepiandrosterone 3-sulfate + reduced [NADPH--hemoprotein reductase] + O2 = 16alpha-hydroxydehydroepiandrosterone 3-sulfate + oxidized [NADPH--hemoprotein reductase] + H2O + H(+). The catalysed reaction is testosterone + reduced [NADPH--hemoprotein reductase] + O2 = 6beta,17beta-dihydroxyandrost-4-en-3-one + oxidized [NADPH--hemoprotein reductase] + H2O + H(+). It catalyses the reaction estrone + reduced [NADPH--hemoprotein reductase] + O2 = 2-hydroxyestrone + oxidized [NADPH--hemoprotein reductase] + H2O + H(+). It carries out the reaction estrone + reduced [NADPH--hemoprotein reductase] + O2 = 4-hydroxyestrone + oxidized [NADPH--hemoprotein reductase] + H2O + H(+). The enzyme catalyses estrone + reduced [NADPH--hemoprotein reductase] + O2 = 16alpha-hydroxyestrone + oxidized [NADPH--hemoprotein reductase] + H2O + H(+). The catalysed reaction is 17beta-estradiol + reduced [NADPH--hemoprotein reductase] + O2 = 2-hydroxy-17beta-estradiol + oxidized [NADPH--hemoprotein reductase] + H2O + H(+). It catalyses the reaction 17beta-estradiol + reduced [NADPH--hemoprotein reductase] + O2 = 6beta-hydroxyestradiol-17beta + oxidized [NADPH--hemoprotein reductase] + H2O + H(+). It carries out the reaction all-trans-retinoate + reduced [NADPH--hemoprotein reductase] + O2 = all-trans-4-hydroxyretinoate + oxidized [NADPH--hemoprotein reductase] + H2O + H(+). The enzyme catalyses all-trans-retinoate + reduced [NADPH--hemoprotein reductase] + O2 = all-trans-18-hydroxyretinoate + oxidized [NADPH--hemoprotein reductase] + H2O + H(+). It participates in steroid hormone biosynthesis. It functions in the pathway cofactor metabolism; retinol metabolism. Its function is as follows. A cytochrome P450 monooxygenase involved in the metabolism of steroid hormones and vitamins during embryogenesis. Mechanistically, uses molecular oxygen inserting one oxygen atom into a substrate, and reducing the second into a water molecule, with two electrons provided by NADPH via cytochrome P450 reductase (NADPH--hemoprotein reductase). Catalyzes the hydroxylation of carbon-hydrogen bonds. Metabolizes 3beta-hydroxyandrost-5-en-17-one (dehydroepiandrosterone, DHEA), a precursor in the biosynthesis of androgen and estrogen steroid hormones. Exhibits high catalytic activity for the formation of hydroxyestrogens from estrone (E1), particularly D-ring hydroxylated estrone at the C16-alpha position. Mainly hydroxylates all trans-retinoic acid (atRA) to 4-hydroxyretinoate and may play a role in atRA clearance during fetal development. Also involved in the oxidative metabolism of xenobiotics including anticonvulsants. In Homo sapiens (Human), this protein is Cytochrome P450 3A7.